We begin with the raw amino-acid sequence, 438 residues long: Trigger factor (438 aa).

The 86-residue stretch at 163-248 (GEIAVLDFAA…VHAVKERKLP (86 aa)) folds into the PPIase FKBP-type domain.

The protein belongs to the FKBP-type PPIase family. Tig subfamily.

The protein localises to the cytoplasm. The catalysed reaction is [protein]-peptidylproline (omega=180) = [protein]-peptidylproline (omega=0). In terms of biological role, involved in protein export. Acts as a chaperone by maintaining the newly synthesized protein in an open conformation. Functions as a peptidyl-prolyl cis-trans isomerase. The chain is Trigger factor from Oleidesulfovibrio alaskensis (strain ATCC BAA-1058 / DSM 17464 / G20) (Desulfovibrio alaskensis).